We begin with the raw amino-acid sequence, 198 residues long: Prostamide/prostaglandin F synthase (198 aa).

Tyrosine 108 is subject to Phosphotyrosine.

This sequence belongs to the peroxiredoxin-like PRXL2 family. Prostamide/prostaglandin F synthase subfamily.

The protein resides in the cytoplasm. The protein localises to the cytosol. It carries out the reaction prostaglandin H2 + [thioredoxin]-dithiol = prostaglandin F2alpha + [thioredoxin]-disulfide. It catalyses the reaction prostamide F2alpha + [thioredoxin]-disulfide = prostamide H2 + [thioredoxin]-dithiol. Catalyzes the reduction of prostaglandin-ethanolamide H(2) (prostamide H(2)) to prostamide F(2alpha) with NADPH as proton donor. Also able to reduce prostaglandin H(2) to prostaglandin F(2alpha). This is Prostamide/prostaglandin F synthase (PRXL2B) from Pongo abelii (Sumatran orangutan).